The following is a 476-amino-acid chain: TOM1-like protein 1 (476 aa).

The VHS domain maps to 22 to 154 (ATFAGVQTED…DLVKKGVQFP (133 aa)). The segment at 155 to 179 (PSEAEAETARQETAQISSNPPTSVP) is disordered. Residues 170 to 179 (ISSNPPTSVP) show a composition bias toward polar residues. Position 171 is a phosphoserine (Ser-171). The GAT domain occupies 200–288 (EQIGKLHSEL…AILGYERFTR (89 aa)). The segment covering 298–314 (KNQKEATNTTSEPSAPS) has biased composition (polar residues). The interval 298-327 (KNQKEATNTTSEPSAPSQDLLDLSPSPRMP) is disordered. Phosphoserine is present on residues Ser-314, Ser-321, and Ser-323. The tract at residues 392–395 (YDNF) is interaction with GRB2. Positions 421-425 (LPPLP) match the SH3-binding motif. The tract at residues 442-445 (YEVM) is interaction with PIK3R1. A Phosphotyrosine modification is found at Tyr-460. The short motif at 460 to 463 (YEEI) is the SH2-binding element.

The protein belongs to the TOM1 family. As to quaternary structure, interacts with FYN, GRB2 and PIK3R1 when phosphorylated. Interacts with LYN. Phosphorylated on tyrosines by FYN and LYN.

It localises to the golgi apparatus. It is found in the golgi stack. The protein localises to the endosome membrane. The protein resides in the cytoplasm. Its subcellular location is the membrane. Probable adapter protein involved in signaling pathways. Interacts with the SH2 and SH3 domains of various signaling proteins when it is phosphorylated. May promote FYN activation, possibly by disrupting intramolecular SH3-dependent interactions. The sequence is that of TOM1-like protein 1 (TOM1L1) from Homo sapiens (Human).